The primary structure comprises 317 residues: DNA-directed RNA polymerase subunit alpha 2 (317 aa).

An alpha N-terminal domain (alpha-NTD) region spans residues 1–227; that stretch reads MALENLLHPT…NQLRNIVDIE (227 aa). The segment at 241-317 is alpha C-terminal domain (alpha-CTD); it reads INPILLKHVE…TLIENWPQDL (77 aa).

Belongs to the RNA polymerase alpha chain family. As to quaternary structure, homodimer. The RNAP catalytic core consists of 2 alpha, 1 beta, 1 beta' and 1 omega subunit. When a sigma factor is associated with the core the holoenzyme is formed, which can initiate transcription.

The enzyme catalyses RNA(n) + a ribonucleoside 5'-triphosphate = RNA(n+1) + diphosphate. In terms of biological role, DNA-dependent RNA polymerase catalyzes the transcription of DNA into RNA using the four ribonucleoside triphosphates as substrates. This chain is DNA-directed RNA polymerase subunit alpha 2, found in Francisella tularensis subsp. holarctica (strain FTNF002-00 / FTA).